The following is a 238-amino-acid chain: Ribonuclease 3 (238 aa).

In terms of domain architecture, RNase III spans 4–127 (IEEFEKRLGY…TMGAIYLETG (124 aa)). Glu-40 contacts Mg(2+). The active site involves Asp-44. Mg(2+) is bound by residues Asn-113 and Glu-116. Glu-116 is an active-site residue. A DRBM domain is found at 154 to 223 (DYKTALQELT…ARIALEIFHR (70 aa)).

Belongs to the ribonuclease III family. In terms of assembly, homodimer. Mg(2+) serves as cofactor.

It localises to the cytoplasm. It carries out the reaction Endonucleolytic cleavage to 5'-phosphomonoester.. Functionally, digests double-stranded RNA. Involved in the processing of primary rRNA transcript to yield the immediate precursors to the large and small rRNAs (23S and 16S). Processes some mRNAs, and tRNAs when they are encoded in the rRNA operon. Processes pre-crRNA and tracrRNA of type II CRISPR loci if present in the organism. In Wolinella succinogenes (strain ATCC 29543 / DSM 1740 / CCUG 13145 / JCM 31913 / LMG 7466 / NCTC 11488 / FDC 602W) (Vibrio succinogenes), this protein is Ribonuclease 3.